The primary structure comprises 469 residues: MNPNQKIITIGSVSLTIATACSLMQIAILATTVTLHFKQHECDSPASNQVMPCEPIIIERNITEIVYLNNTTIEKEICPEVVEYRNWSKPQCQITGFAPFSKDNSIRLSAGGDIWVTREPYVSCDPGKCYQFALGQGTTLDNKHSNGTIHDRIPHRTLLMNELGVPFHLGTKQVCVAWSSSSCHDGKAWLHVCVTGDDRNATASFIYDGRLVDSIGSWSQNILRTQESECVCINGTCTVVMTDGSASGRADTRILFIKEGKIVHISPLSGSAQHIEECSCYPRYPDVRCICRDNWKGSNRPVIDINMEDYSIDSSYVCSGLVGDTPRNDDSSSNSNCRDPNNERGNPGVKGWAFDNGDDVWMGRTISKDSRSGYETFKVIGGWSTPNSKSQVNRQVIVDNNNWSGYSGIFSVEGKSCINRCFYVELIRGRPQETRVWWTSNSIVVFCGTSGTYGTGSWPDGANINFMPI.

At 1–6 (MNPNQK) the chain is on the intravirion side. Residues 7 to 29 (IITIGSVSLTIATACSLMQIAIL) form a helical membrane-spanning segment. Positions 11–33 (GSVSLTIATACSLMQIAILATTV) are involved in apical transport and lipid raft association. Residues 30–469 (ATTVTLHFKQ…DGANINFMPI (440 aa)) lie on the Virion surface side of the membrane. The hypervariable stalk region stretch occupies residues 36–88 (HFKQHECDSPASNQVMPCEPIIIERNITEIVYLNNTTIEKEICPEVVEYRNWS). N-linked (GlcNAc...) asparagine; by host glycosylation is found at asparagine 61, asparagine 69, asparagine 70, and asparagine 86. Residues 91-469 (QCQITGFAPF…DGANINFMPI (379 aa)) form a head of neuraminidase region. 8 cysteine pairs are disulfide-bonded: cysteine 92-cysteine 417, cysteine 124-cysteine 129, cysteine 183-cysteine 230, cysteine 232-cysteine 237, cysteine 278-cysteine 291, cysteine 280-cysteine 289, cysteine 318-cysteine 337, and cysteine 421-cysteine 447. Residue arginine 118 participates in substrate binding. Asparagine 146 carries an N-linked (GlcNAc...) asparagine; by host glycan. Aspartate 151 functions as the Proton donor/acceptor in the catalytic mechanism. Position 152 (arginine 152) interacts with substrate. Asparagine 200 and asparagine 234 each carry an N-linked (GlcNAc...) asparagine; by host glycan. Substrate is bound at residue 276-277 (EE). Position 292 (arginine 292) interacts with substrate. The Ca(2+) site is built by aspartate 293, glycine 297, and aspartate 324. Positions 325–349 (TPRNDDSSSNSNCRDPNNERGNPGV) are disordered. Residue arginine 371 coordinates substrate. N-linked (GlcNAc...) asparagine; by host glycosylation is present at asparagine 402. The active-site Nucleophile is the tyrosine 406.

This sequence belongs to the glycosyl hydrolase 34 family. As to quaternary structure, homotetramer. It depends on Ca(2+) as a cofactor. N-glycosylated.

Its subcellular location is the virion membrane. The protein resides in the host apical cell membrane. It carries out the reaction Hydrolysis of alpha-(2-&gt;3)-, alpha-(2-&gt;6)-, alpha-(2-&gt;8)- glycosidic linkages of terminal sialic acid residues in oligosaccharides, glycoproteins, glycolipids, colominic acid and synthetic substrates.. Its activity is regulated as follows. Inhibited by the neuraminidase inhibitors zanamivir (Relenza) and oseltamivir (Tamiflu). These drugs interfere with the release of progeny virus from infected cells and are effective against all influenza strains. Resistance to neuraminidase inhibitors is quite rare. In terms of biological role, catalyzes the removal of terminal sialic acid residues from viral and cellular glycoconjugates. Cleaves off the terminal sialic acids on the glycosylated HA during virus budding to facilitate virus release. Additionally helps virus spread through the circulation by further removing sialic acids from the cell surface. These cleavages prevent self-aggregation and ensure the efficient spread of the progeny virus from cell to cell. Otherwise, infection would be limited to one round of replication. Described as a receptor-destroying enzyme because it cleaves a terminal sialic acid from the cellular receptors. May facilitate viral invasion of the upper airways by cleaving the sialic acid moieties on the mucin of the airway epithelial cells. Likely to plays a role in the budding process through its association with lipid rafts during intracellular transport. May additionally display a raft-association independent effect on budding. Plays a role in the determination of host range restriction on replication and virulence. Sialidase activity in late endosome/lysosome traffic seems to enhance virus replication. This is Neuraminidase from Aves (Human).